Consider the following 256-residue polypeptide: MALSLTNKNVVFVAGLGGIGLDTTKELLKRDLKNLVILDRIDNPVVIAELKTINPKVTVTFIPYDVTVPITETKKLLKTIFDKLKTVDILINGAGILDDHQIERTIAVNYTGLVNTTTAILDFWDKRKGGPGGIICNIGSVTGFNAIYQVPVYSGTKAAVVNFTSSLAKLAPITGVTAYTVNPGITRTTLVHKFNSWLDVEPQVAEKLLAHPTQSSQACGENFVKAIELNQNGAIWKLDRGTLEAIQWSKHWDSGI.

NAD(+) is bound at residue 12–41 (FVAGLGGIGLDTTKELLKRDLKNLVILDRI). Ser-140 is a binding site for substrate. Residue Tyr-153 is the Proton acceptor of the active site.

This sequence belongs to the short-chain dehydrogenases/reductases (SDR) family. As to quaternary structure, homodimer.

The catalysed reaction is a primary alcohol + NAD(+) = an aldehyde + NADH + H(+). It carries out the reaction a secondary alcohol + NAD(+) = a ketone + NADH + H(+). In Drosophila ananassae (Fruit fly), this protein is Alcohol dehydrogenase.